A 170-amino-acid chain; its full sequence is 3-isopropylmalate dehydratase small subunit 1 (170 aa).

Belongs to the LeuD family. LeuD type 2 subfamily. As to quaternary structure, heterodimer of LeuC and LeuD.

It catalyses the reaction (2R,3S)-3-isopropylmalate = (2S)-2-isopropylmalate. Its pathway is amino-acid biosynthesis; L-leucine biosynthesis; L-leucine from 3-methyl-2-oxobutanoate: step 2/4. In terms of biological role, catalyzes the isomerization between 2-isopropylmalate and 3-isopropylmalate, via the formation of 2-isopropylmaleate. The sequence is that of 3-isopropylmalate dehydratase small subunit 1 (leuD1) from Methanopyrus kandleri (strain AV19 / DSM 6324 / JCM 9639 / NBRC 100938).